Consider the following 196-residue polypeptide: Venom platylysin (196 aa).

It belongs to the redulysin-like family. As to expression, expressed by the venom gland.

Its subcellular location is the secreted. Functionally, probable insecticidal toxin that has been detected in a semi-pure insecticidal fraction. In Platymeris biguttatus (Two-spotted assassin bug), this protein is Venom platylysin.